Here is a 60-residue protein sequence, read N- to C-terminus: Homeobox protein CHOX-CAD2 (60 aa).

The segment at residues 1–60 (KEKYRVVYTDHQRLELEKEFHCNRYITIRRKSELAVNLGLSERQVKSWFQNRRAKERKII) is a DNA-binding region (homeobox).

It belongs to the Caudal homeobox family.

It localises to the nucleus. This Gallus gallus (Chicken) protein is Homeobox protein CHOX-CAD2 (CHOX-CAD2).